The following is a 351-amino-acid chain: SLAM family member 6 (351 aa).

Positions 1 to 30 (MAVSRAPAPDSACQRMVWLFPLVFCLGSGS) are cleaved as a signal peptide. Topologically, residues 31-239 (EVSQSSSDPQ…KGVLTNPPWN (209 aa)) are extracellular. The Ig-like V-type domain occupies 36–130 (SSDPQLMNGV…YTAQITTKDS (95 aa)). N-linked (GlcNAc...) asparagine glycans are attached at residues Asn82, Asn101, Asn112, Asn152, Asn159, Asn172, Asn186, Asn193, and Asn218. The region spanning 147–210 (NLETTNYTLL…RNSGDQTYVC (64 aa)) is the Ig-like C2-type domain. Cystine bridges form between Cys162-Cys229 and Cys168-Cys210. The chain crosses the membrane as a helical span at residues 240 to 262 (AVWFMTTISIISAVILIFVCWSI). Residues 263–351 (HVWKRRGSLP…KVNTLINYNS (89 aa)) are Cytoplasmic-facing. The tract at residues 272-295 (PLTSQHPESSQSTDGPGSPGNTVY) is disordered. 2 consecutive short sequence motifs (ITSM) follow at residues 293–298 (TVYAQV) and 317–322 (TIYSIV). Tyr319 is modified (phosphotyrosine).

As to quaternary structure, homodimer. Interacts with PTN6 and, upon phosphorylation, with PTN11 and SH2D1A/SAP. Phosphorylated. As to expression, expressed on hematopoietic cells. Isoform 3 is expressed in thymocytes and B lymphocytes of C57Bl/6 strain.

The protein resides in the cell membrane. Its function is as follows. Self-ligand receptor of the signaling lymphocytic activation molecule (SLAM) family. SLAM receptors triggered by homo- or heterotypic cell-cell interactions are modulating the activation and differentiation of a wide variety of immune cells and thus are involved in the regulation and interconnection of both innate and adaptive immune response. Activities are controlled by presence or absence of small cytoplasmic adapter proteins, SH2D1A/SAP and/or SH2D1B/EAT-2. Triggers cytolytic activity only in natural killer cells (NK) expressing high surface densities of natural cytotoxicity receptors. Positive signaling in NK cells implicates phosphorylation of VAV1. NK cell activation seems to depend on SH2D1B and not on SH2D1A. In conjunction with SLAMF1 controls the transition between positive selection and the subsequent expansion and differentiation of the thymocytic natural killer T (NKT) cell lineage. Promotes T cell differentiation into a helper T-cell Th17 phenotype leading to increased IL-17 secretion; the costimulatory activity requires SH2D1A. Promotes recruitment of RORC to the IL-17 promoter. In conjunction with SLAMF1 and CD84/SLAMF5 may be a negative regulator of the humoral immune response. In the absence of SH2D1A/SAP can transmit negative signals to CD4(+) T-cells and NKT cells. Negatively regulates germinal center formation by inhibiting T-cell:B-cell adhesion; the function probably implicates increased association with PTPN6/SHP-1 via ITSMs in absence of SH2D1A/SAP. However, reported to mediated T-cell adhesion, to participate in stable T-cell:B-cell interactions and to be involved in maintaining B-cell tolerance in germinal centers and in preventing autoimmunity. Involved in regulation of autoimmunity. Isoform 3 may be suppressor of pathogenic T-cell proliferation. The chain is SLAM family member 6 (Slamf6) from Mus musculus (Mouse).